Reading from the N-terminus, the 302-residue chain is Oxygen-dependent coproporphyrinogen-III oxidase (302 aa).

Ser94 lines the substrate pocket. Residues His98 and His108 each coordinate a divalent metal cation. His108 serves as the catalytic Proton donor. 110-112 (NVR) contributes to the substrate binding site. A divalent metal cation-binding residues include His147 and His177. The interval 242–277 (YVEFNLVYDRGTLFGLQTGGRTESILMSMPPLVRWQ) is important for dimerization. 260-262 (GGR) is a substrate binding site.

The protein belongs to the aerobic coproporphyrinogen-III oxidase family. Homodimer. A divalent metal cation is required as a cofactor.

Its subcellular location is the cytoplasm. The enzyme catalyses coproporphyrinogen III + O2 + 2 H(+) = protoporphyrinogen IX + 2 CO2 + 2 H2O. Its pathway is porphyrin-containing compound metabolism; protoporphyrin-IX biosynthesis; protoporphyrinogen-IX from coproporphyrinogen-III (O2 route): step 1/1. Functionally, involved in the heme biosynthesis. Catalyzes the aerobic oxidative decarboxylation of propionate groups of rings A and B of coproporphyrinogen-III to yield the vinyl groups in protoporphyrinogen-IX. The sequence is that of Oxygen-dependent coproporphyrinogen-III oxidase from Shewanella oneidensis (strain ATCC 700550 / JCM 31522 / CIP 106686 / LMG 19005 / NCIMB 14063 / MR-1).